The chain runs to 100 residues: Enhancer of yellow 2 transcription factor (100 aa).

The protein belongs to the ENY2 family. Component of the nuclear pore complex (NPC)-associated AMEX complex (anchoring and mRNA export complex), composed of at least e(y)2 and xmas-2. Component of the SAGA transcription coactivator-HAT complexes, at least composed of Ada2b, e(y)2, Pcaf/Gcn5, Taf10 and Nipped-A/Trrap. Within the SAGA complex, e(y)2, Sgf11, and not/nonstop form an additional subcomplex of SAGA called the DUB module (deubiquitination module). Component of the THO complex, composed of at least e(y)2, HPR1, THO2, THOC5, THOC6 and THOC7. Interacts with e(y)1. Interacts with su(Hw) (via zinc fingers). Interacts with xmas-2; required for localization to the nuclear periphery. Interacts with the nuclear pore complex (NPC).

Its subcellular location is the nucleus. The protein localises to the nucleoplasm. The protein resides in the cytoplasm. Functionally, involved in mRNA export coupled transcription activation by association with both the AMEX and the SAGA complexes. The SAGA complex is a multiprotein complex that activates transcription by remodeling chromatin and mediating histone acetylation and deubiquitination. Within the SAGA complex, participates in a subcomplex that specifically deubiquitinates histone H2B. The SAGA complex is recruited to specific gene promoters by activators, where it is required for transcription. Required for nuclear receptor-mediated transactivation. Involved in transcription elongation by recruiting the THO complex onto nascent mRNA. The AMEX complex functions in docking export-competent ribonucleoprotein particles (mRNPs) to the nuclear entrance of the nuclear pore complex (nuclear basket). AMEX participates in mRNA export and accurate chromatin positioning in the nucleus by tethering genes to the nuclear periphery. This chain is Enhancer of yellow 2 transcription factor, found in Drosophila ananassae (Fruit fly).